A 605-amino-acid chain; its full sequence is Protein Spindly (605 aa).

Met1 is modified (N-acetylmethionine). Positions 2–442 form a coiled coil; it reads EADIITNLRC…ELKLKYEPEE (441 aa). Phosphoserine occurs at positions 513, 515, and 555. Residues 544-580 form a disordered region; sequence ALSERSGNTPNSPRLAAESKLQTEVKEGKETSSKLEK. Basic and acidic residues predominate over residues 564–580; the sequence is LQTEVKEGKETSSKLEK.

It belongs to the Spindly family. As to quaternary structure, interacts with KNTC1 and ZW10. These interactions appear weak and may be transient or indirect. Interacts with dynein intermediate chain and dynactin (DCTN1). Interacts with the catalytically active form of USP45. In terms of processing, monoubiquitinated with'Lys-48' linkage. Deubiquitinated by USP45.

It localises to the cytoplasm. The protein localises to the cytoskeleton. Its subcellular location is the microtubule organizing center. The protein resides in the centrosome. It is found in the chromosome. It localises to the centromere. The protein localises to the kinetochore. Its subcellular location is the nucleus. The protein resides in the spindle pole. Required for the localization of dynein and dynactin to the mitotic kintochore. Dynein is believed to control the initial lateral interaction between the kinetochore and spindle microtubules and to facilitate the subsequent formation of end-on kinetochore-microtubule attachments mediated by the NDC80 complex. Also required for correct spindle orientation. Does not appear to be required for the removal of spindle assembly checkpoint (SAC) proteins from the kinetochore upon bipolar spindle attachment. Acts as an adapter protein linking the dynein motor complex to various cargos and converts dynein from a non-processive to a highly processive motor in the presence of dynactin. Facilitates the interaction between dynein and dynactin and activates dynein processivity (the ability to move along a microtubule for a long distance without falling off the track). Plays a role in cell migration. This Homo sapiens (Human) protein is Protein Spindly.